Consider the following 349-residue polypeptide: UDP-N-acetylenolpyruvoylglucosamine reductase (349 aa).

The 172-residue stretch at Phe26–Ala197 folds into the FAD-binding PCMH-type domain. The active site involves Arg173. The active-site Proton donor is the Ser249. Residue Glu345 is part of the active site.

The protein belongs to the MurB family. Requires FAD as cofactor.

It is found in the cytoplasm. It catalyses the reaction UDP-N-acetyl-alpha-D-muramate + NADP(+) = UDP-N-acetyl-3-O-(1-carboxyvinyl)-alpha-D-glucosamine + NADPH + H(+). The protein operates within cell wall biogenesis; peptidoglycan biosynthesis. Its function is as follows. Cell wall formation. This chain is UDP-N-acetylenolpyruvoylglucosamine reductase, found in Burkholderia pseudomallei (strain K96243).